The chain runs to 221 residues: Ribosomal RNA large subunit methyltransferase E (221 aa).

5 residues coordinate S-adenosyl-L-methionine: glycine 60, tryptophan 62, aspartate 89, aspartate 105, and aspartate 134. Catalysis depends on lysine 174, which acts as the Proton acceptor.

It belongs to the class I-like SAM-binding methyltransferase superfamily. RNA methyltransferase RlmE family.

It is found in the cytoplasm. The catalysed reaction is uridine(2552) in 23S rRNA + S-adenosyl-L-methionine = 2'-O-methyluridine(2552) in 23S rRNA + S-adenosyl-L-homocysteine + H(+). Specifically methylates the uridine in position 2552 of 23S rRNA at the 2'-O position of the ribose in the fully assembled 50S ribosomal subunit. The polypeptide is Ribosomal RNA large subunit methyltransferase E (Cupriavidus necator (strain ATCC 17699 / DSM 428 / KCTC 22496 / NCIMB 10442 / H16 / Stanier 337) (Ralstonia eutropha)).